The sequence spans 244 residues: THO complex subunit 4A (244 aa).

The interval 1 to 82 is disordered; it reads MSTGLDMSLD…EDHRSGRSSA (82 aa). Residue S2 is modified to N-acetylserine. The span at 21 to 35 shows a compositional bias: gly residues; sequence GGAGPARGTGSGSGP. Basic and acidic residues predominate over residues 67–77; the sequence is MFSDRSEDHRS. The 78-residue stretch at 88 to 165 folds into the RRM domain; it reads TKLYISNLDY…KPMKIEIVGT (78 aa). The segment at 169 to 244 is disordered; that stretch reads TAAAPSGRPA…KYHSGDMETN (76 aa). A compositionally biased stretch (gly residues) spans 187–211; it reads WRGGQGRGGQQRGGGRGGGGRGGGG. Positions 220–244 are enriched in basic and acidic residues; sequence PAEKISAEDLDADLDKYHSGDMETN.

Belongs to the ALYREF family.

It is found in the nucleus. The protein resides in the nucleoplasm. The protein localises to the nucleolus. Functionally, export adapter involved in nuclear export of spliced and unspliced mRNA. The polypeptide is THO complex subunit 4A (ALY1) (Arabidopsis thaliana (Mouse-ear cress)).